We begin with the raw amino-acid sequence, 393 residues long: Prokineticin receptor 1 (393 aa).

Over 1 to 62 the chain is Extracellular; that stretch reads METTMGFMDD…TNSRTFFAAK (62 aa). 3 N-linked (GlcNAc...) asparagine glycosylation sites follow: asparagine 11, asparagine 14, and asparagine 36. The chain crosses the membrane as a helical span at residues 63 to 83; it reads IVIGMALVGIMLVCGIGNFIF. The Cytoplasmic segment spans residues 84 to 98; that stretch reads IAALVRYKKLRNLTN. Residues 99 to 119 traverse the membrane as a helical segment; sequence LLIANLAISDFLVAIVCCPFE. Over 120–146 the chain is Extracellular; sequence MDYYVVRQLSWEHGHVLCTSVNYLRTV. Cysteine 137 and cysteine 217 are oxidised to a cystine. Residues 147-167 traverse the membrane as a helical segment; it reads SLYVSTNALLAIAIDRYLAIV. The Cytoplasmic segment spans residues 168–180; the sequence is HPLRPRMKCQTAT. Residues 181–201 traverse the membrane as a helical segment; sequence GLIALVWTVSILIAIPSAYFT. The Extracellular portion of the chain corresponds to 202 to 232; the sequence is TETVLVIVKSQEKIFCGQIWPVDQQLYYKSY. Residues 233 to 253 traverse the membrane as a helical segment; the sequence is FLFIFGIEFVGPVVTMTLCYA. Over 254-282 the chain is Cytoplasmic; that stretch reads RISRELWFKAVPGFQTEQIRKRLRCRRKT. The chain crosses the membrane as a helical span at residues 283–303; it reads VLVLMCILTAYVLCWAPFYGF. At 304-322 the chain is on the extracellular side; sequence TIVRDFFPTVFVKEKHYLT. Residues 323–343 traverse the membrane as a helical segment; sequence AFYIVECIAMSNSMINTLCFV. Residues 344–393 are Cytoplasmic-facing; it reads TVKNDTVKYFKKIMLLHWKASYNGGKSSADLDLKTIGMPATEEVDCIRLK.

The protein belongs to the G-protein coupled receptor 1 family. As to expression, localizes to glandular epithelium, stroma and vascular endothelial cells of first trimester decidua (at protein level). Up-regulated in first trimester decidua when compared with non-pregnant endometrium. Expressed in the stomach, throughout the small intestine, colon, rectum, thyroid gland, pituitary gland, salivary gland, adrenal gland, testis, ovary, brain, spleen, prostate and pancreas.

It localises to the cell membrane. In terms of biological role, receptor for prokineticin 1. Exclusively coupled to the G(q) subclass of heteromeric G proteins. Activation leads to mobilization of calcium, stimulation of phosphoinositide turnover and activation of p44/p42 mitogen-activated protein kinase. May play a role during early pregnancy. This is Prokineticin receptor 1 (PROKR1) from Homo sapiens (Human).